Here is a 421-residue protein sequence, read N- to C-terminus: O-glycosyltransferase braB (421 aa).

Residues Met1–Pro26 form a disordered region. A compositionally biased stretch (polar residues) spans Gly13–Ala22.

It belongs to the afumC glycosyltransferase family.

It functions in the pathway secondary metabolite biosynthesis. Functionally, O-glycosyltransferase; part of the gene cluster that mediates the biosynthesis of the brasilane terpene glycosides brasilane D and E. The biosynthesis starts with the activity of the terpene cyclase braA that converts farnesyl pyrophosphate into the sesquiterpene alcohol trichobrasilenol. Subsequently, trichobrasilenol is glycosylated by the O-glycosyltransferase braB putatively using UDP-GlcNAc as sugar donor to yield brasilane A. The latter then undergoes two rounds of oxidation performed by the cytochrome P450 monooxygenase braC. In the first round braC hydroxylates C-12 forming brasilane D, which serves as substrate in the second round to establish the epoxide at the bond between C-5 and C-10 and oxidize the alcohol at C-12 to an aldehyde leading to the final product brasilane E. BraB is also able to glycosylate geraniol, linalool, perillyl alcohol, 3,4-dichlorophenol and, to a lesser extend, benzyl alcohol. This chain is O-glycosyltransferase braB, found in Annulohypoxylon truncatum (Hypoxylon truncatum).